Consider the following 103-residue polypeptide: MHVKKGDKVQVITGKDKGKQGVILVAFPKQNRVIVEGVNIVKKHSKPSQLNPQGGIITKEAPIHVSNVMVLDPKTGEPTRVGFKVEDGKKVRIAKKSGELLDK.

This sequence belongs to the universal ribosomal protein uL24 family. Part of the 50S ribosomal subunit.

One of two assembly initiator proteins, it binds directly to the 5'-end of the 23S rRNA, where it nucleates assembly of the 50S subunit. In terms of biological role, one of the proteins that surrounds the polypeptide exit tunnel on the outside of the subunit. This Bacillus mycoides (strain KBAB4) (Bacillus weihenstephanensis) protein is Large ribosomal subunit protein uL24.